We begin with the raw amino-acid sequence, 185 residues long: UPF0397 protein lhv_0999 (185 aa).

5 helical membrane-spanning segments follow: residues 11-31 (VVAMGIGSAIYVILTRFTSIP), 45-65 (FLALFAAIYGAKVGFAVGFIG), 72-92 (IMYGQTWWSWVLATGVLGLII), 111-131 (ILLFNIVQIFANIIAWIVVAP), and 145-165 (VFVQGISATLSNGITILVVGT).

It belongs to the UPF0397 family.

It is found in the cell membrane. In Lactobacillus helveticus (strain DPC 4571), this protein is UPF0397 protein lhv_0999.